The sequence spans 612 residues: Dihydroxy-acid dehydratase (612 aa).

Residue Asp-81 coordinates Mg(2+). Cys-122 provides a ligand contact to [2Fe-2S] cluster. Mg(2+)-binding residues include Asp-123 and Lys-124. Lys-124 is subject to N6-carboxylysine. Cys-193 is a [2Fe-2S] cluster binding site. Residue Glu-489 participates in Mg(2+) binding. The Proton acceptor role is filled by Ser-515.

It belongs to the IlvD/Edd family. In terms of assembly, homodimer. Requires [2Fe-2S] cluster as cofactor. Mg(2+) is required as a cofactor.

It carries out the reaction (2R)-2,3-dihydroxy-3-methylbutanoate = 3-methyl-2-oxobutanoate + H2O. It catalyses the reaction (2R,3R)-2,3-dihydroxy-3-methylpentanoate = (S)-3-methyl-2-oxopentanoate + H2O. Its pathway is amino-acid biosynthesis; L-isoleucine biosynthesis; L-isoleucine from 2-oxobutanoate: step 3/4. It participates in amino-acid biosynthesis; L-valine biosynthesis; L-valine from pyruvate: step 3/4. Its function is as follows. Functions in the biosynthesis of branched-chain amino acids. Catalyzes the dehydration of (2R,3R)-2,3-dihydroxy-3-methylpentanoate (2,3-dihydroxy-3-methylvalerate) into 2-oxo-3-methylpentanoate (2-oxo-3-methylvalerate) and of (2R)-2,3-dihydroxy-3-methylbutanoate (2,3-dihydroxyisovalerate) into 2-oxo-3-methylbutanoate (2-oxoisovalerate), the penultimate precursor to L-isoleucine and L-valine, respectively. This chain is Dihydroxy-acid dehydratase, found in Xanthomonas oryzae pv. oryzae (strain MAFF 311018).